We begin with the raw amino-acid sequence, 219 residues long: PKHD-type hydroxylase Mmar10_1675 (219 aa).

Residues 77–171 (TLSRILVSRY…RVAVVGWVRS (95 aa)) form the Fe2OG dioxygenase domain. Fe cation is bound by residues His-95, Asp-97, and His-152. Arg-162 contacts 2-oxoglutarate.

Fe(2+) is required as a cofactor. It depends on L-ascorbate as a cofactor.

The polypeptide is PKHD-type hydroxylase Mmar10_1675 (Maricaulis maris (strain MCS10) (Caulobacter maris)).